Here is a 1371-residue protein sequence, read N- to C-terminus: DNA-directed RNA polymerase subunit beta'' (1371 aa).

Zn(2+)-binding residues include Cys-220, Cys-293, Cys-300, and Cys-303.

The protein belongs to the RNA polymerase beta' chain family. RpoC2 subfamily. In terms of assembly, in plastids the minimal PEP RNA polymerase catalytic core is composed of four subunits: alpha, beta, beta', and beta''. When a (nuclear-encoded) sigma factor is associated with the core the holoenzyme is formed, which can initiate transcription. Zn(2+) serves as cofactor.

It is found in the plastid. The protein localises to the chloroplast. It catalyses the reaction RNA(n) + a ribonucleoside 5'-triphosphate = RNA(n+1) + diphosphate. In terms of biological role, DNA-dependent RNA polymerase catalyzes the transcription of DNA into RNA using the four ribonucleoside triphosphates as substrates. In Lobularia maritima (Sweet alyssum), this protein is DNA-directed RNA polymerase subunit beta''.